Here is a 255-residue protein sequence, read N- to C-terminus: Aspartate/glutamate leucyltransferase (255 aa).

It belongs to the R-transferase family. Bpt subfamily.

The protein resides in the cytoplasm. It catalyses the reaction N-terminal L-glutamyl-[protein] + L-leucyl-tRNA(Leu) = N-terminal L-leucyl-L-glutamyl-[protein] + tRNA(Leu) + H(+). The enzyme catalyses N-terminal L-aspartyl-[protein] + L-leucyl-tRNA(Leu) = N-terminal L-leucyl-L-aspartyl-[protein] + tRNA(Leu) + H(+). In terms of biological role, functions in the N-end rule pathway of protein degradation where it conjugates Leu from its aminoacyl-tRNA to the N-termini of proteins containing an N-terminal aspartate or glutamate. The chain is Aspartate/glutamate leucyltransferase from Leptospira borgpetersenii serovar Hardjo-bovis (strain JB197).